Reading from the N-terminus, the 245-residue chain is Acetylglutamate kinase (245 aa).

Substrate contacts are provided by residues 41 to 42, Arg63, and Asn156; that span reads GG.

It belongs to the acetylglutamate kinase family. ArgB subfamily.

It is found in the cytoplasm. The catalysed reaction is N-acetyl-L-glutamate + ATP = N-acetyl-L-glutamyl 5-phosphate + ADP. It participates in amino-acid biosynthesis; L-arginine biosynthesis; N(2)-acetyl-L-ornithine from L-glutamate: step 2/4. Functionally, catalyzes the ATP-dependent phosphorylation of N-acetyl-L-glutamate. The chain is Acetylglutamate kinase from Streptococcus gordonii (strain Challis / ATCC 35105 / BCRC 15272 / CH1 / DL1 / V288).